A 166-amino-acid polypeptide reads, in one-letter code: Interferon gamma (166 aa).

The signal sequence occupies residues Met-1–Cys-23. Gln-24 bears the Pyrrolidone carboxylic acid mark. Asn-39 and Asn-106 each carry an N-linked (GlcNAc...) asparagine glycan.

This sequence belongs to the type II (or gamma) interferon family. In terms of assembly, homodimer. Interacts with IFNGR1 (via extracellular domain); this interaction promotes IFNGR1 dimerization. In terms of tissue distribution, released primarily from activated T lymphocytes.

The protein localises to the secreted. Type II interferon produced by immune cells such as T-cells and NK cells that plays crucial roles in antimicrobial, antiviral, and antitumor responses by activating effector immune cells and enhancing antigen presentation. Primarily signals through the JAK-STAT pathway after interaction with its receptor IFNGR1 to affect gene regulation. Upon IFNG binding, IFNGR1 intracellular domain opens out to allow association of downstream signaling components JAK2, JAK1 and STAT1, leading to STAT1 activation, nuclear translocation and transcription of IFNG-regulated genes. Many of the induced genes are transcription factors such as IRF1 that are able to further drive regulation of a next wave of transcription. Plays a role in class I antigen presentation pathway by inducing a replacement of catalytic proteasome subunits with immunoproteasome subunits. In turn, increases the quantity, quality, and repertoire of peptides for class I MHC loading. Increases the efficiency of peptide generation also by inducing the expression of activator PA28 that associates with the proteasome and alters its proteolytic cleavage preference. Up-regulates as well MHC II complexes on the cell surface by promoting expression of several key molecules such as cathepsins B/CTSB, H/CTSH, and L/CTSL. Participates in the regulation of hematopoietic stem cells during development and under homeostatic conditions by affecting their development, quiescence, and differentiation. In Camelus bactrianus (Bactrian camel), this protein is Interferon gamma (IFNG).